The following is a 264-amino-acid chain: Phosphatidylserine decarboxylase proenzyme (264 aa).

Active-site charge relay system; for autoendoproteolytic cleavage activity residues include Asp-86, His-142, and Ser-226. The active-site Schiff-base intermediate with substrate; via pyruvic acid; for decarboxylase activity is the Ser-226. Ser-226 is subject to Pyruvic acid (Ser); by autocatalysis.

This sequence belongs to the phosphatidylserine decarboxylase family. PSD-B subfamily. Prokaryotic type I sub-subfamily. In terms of assembly, heterodimer of a large membrane-associated beta subunit and a small pyruvoyl-containing alpha subunit. Requires pyruvate as cofactor. Is synthesized initially as an inactive proenzyme. Formation of the active enzyme involves a self-maturation process in which the active site pyruvoyl group is generated from an internal serine residue via an autocatalytic post-translational modification. Two non-identical subunits are generated from the proenzyme in this reaction, and the pyruvate is formed at the N-terminus of the alpha chain, which is derived from the carboxyl end of the proenzyme. The autoendoproteolytic cleavage occurs by a canonical serine protease mechanism, in which the side chain hydroxyl group of the serine supplies its oxygen atom to form the C-terminus of the beta chain, while the remainder of the serine residue undergoes an oxidative deamination to produce ammonia and the pyruvoyl prosthetic group on the alpha chain. During this reaction, the Ser that is part of the protease active site of the proenzyme becomes the pyruvoyl prosthetic group, which constitutes an essential element of the active site of the mature decarboxylase.

The protein localises to the cell membrane. It catalyses the reaction a 1,2-diacyl-sn-glycero-3-phospho-L-serine + H(+) = a 1,2-diacyl-sn-glycero-3-phosphoethanolamine + CO2. It participates in phospholipid metabolism; phosphatidylethanolamine biosynthesis; phosphatidylethanolamine from CDP-diacylglycerol: step 2/2. Catalyzes the formation of phosphatidylethanolamine (PtdEtn) from phosphatidylserine (PtdSer). This is Phosphatidylserine decarboxylase proenzyme from Geobacillus kaustophilus (strain HTA426).